Here is a 439-residue protein sequence, read N- to C-terminus: Ribulose bisphosphate carboxylase/oxygenase activase, chloroplastic (439 aa).

ATP is bound at residue 167 to 174; the sequence is GGKGQGKS.

The protein belongs to the RuBisCO activase family.

It is found in the plastid. The protein localises to the chloroplast stroma. In terms of biological role, activation of RuBisCO (ribulose-1,5-bisphosphate carboxylase/oxygenase; EC 4.1.1.39) involves the ATP-dependent carboxylation of the epsilon-amino group of lysine leading to a carbamate structure. The protein is Ribulose bisphosphate carboxylase/oxygenase activase, chloroplastic (RCA) of Vigna radiata var. radiata (Mung bean).